Here is a 595-residue protein sequence, read N- to C-terminus: Glycine betaine transporter BetP (595 aa).

Residues 1–59 (MTTSDPNPKPIVEDAQPEQITATEELAGLLENPTNLEGKLADAEEEIILEGEDTQASLN) lie on the Cytoplasmic side of the membrane. Residues 60–80 (WSVIVPALVIVLATVVWGIGF) form a helical membrane-spanning segment. Topologically, residues 81-98 (KDSFTNFASSALSAVVDN) are periplasmic. A helical transmembrane segment spans residues 99 to 119 (LGWAFILFGTVFVFFIVVIAA). Residues 120 to 137 (SKFGTIRLGRIDEAPEFR) lie on the Cytoplasmic side of the membrane. Residues 138–158 (TVSWISMMFAAGMGIGLMFYG) traverse the membrane as a helical segment. Residues Ala147, Ala148, and Met150 each coordinate Na(+). 152 to 153 (IG) lines the glycine betaine pocket. The Periplasmic segment spans residues 159–185 (TTEPLTFYRNGVPGHDEHNVGVAMSTT). Residues 186-206 (MFHWTLHPWAIYAIVGLAIAY) form a helical membrane-spanning segment. The Cytoplasmic segment spans residues 207-236 (STFRVGRKQLLSSAFVPLIGEKGAEGWLGK). A helical transmembrane segment spans residues 237 to 257 (LIDILAIIATVFGTACSLGLG). Ser253 is a glycine betaine binding site. Residues 258–276 (ALQIGAGLSAANIIEDPSD) lie on the Periplasmic side of the membrane. The chain crosses the membrane as a helical span at residues 277–296 (WTIVGIVSVLTLAFIFSAIS). The Cytoplasmic portion of the chain corresponds to 297 to 299 (GVG). Residues 300–323 (KGIQYLSNANMVLAALLAIFVFVV) traverse the membrane as a helical segment. Na(+) is bound by residues Ser306 and Met310. Residues 324–365 (GPTVSILNLLPGSIGNYLSNFFQMAGRTAMSADGTAGEWLGS) lie on the Periplasmic side of the membrane. The helical transmembrane segment at 366–386 (WTIFYWAWWISWSPFVGMFLA) threads the bilayer. Position 373–377 (373–377 (WWISW)) interacts with glycine betaine. Over 387–396 (RISRGRSIRE) the chain is Cytoplasmic. The chain crosses the membrane as a helical span at residues 397–417 (FILGVLLVPAGVSTVWFSIFG). The Periplasmic segment spans residues 418–451 (GTAIVFEQNGESIWGDGAAEEQLFGLLHALPGGQ). A helical membrane pass occupies residues 452-476 (IMGIIAMILLGTFFITSADSASTVM). The Cytoplasmic portion of the chain corresponds to 477 to 489 (GTMSQHGQLEANK). Residues 490 to 510 (WVTAAWGVATAAIGLTLLLSG) form a helical membrane-spanning segment. The Periplasmic segment spans residues 511 to 520 (GDNALSNLQN). A helical membrane pass occupies residues 521–541 (VTIVAATPFLFVVIGLMFALV). The Cytoplasmic portion of the chain corresponds to 542–595 (KDLSNDVIYLEYREQQRFNARLARERRVHNEHRKRELAAKRRRERKASGAGKRR). Residues 570–595 (HNEHRKRELAAKRRRERKASGAGKRR) form a disordered region. The span at 581 to 595 (KRRRERKASGAGKRR) shows a compositional bias: basic residues.

Belongs to the BCCT transporter (TC 2.A.15) family. In terms of assembly, homotrimer. The monomer can accumulate glycine betaine, but trimerization is required to properly respond to osmotic stress.

It is found in the cell inner membrane. Its activity is regulated as follows. Uptake is activated by hyperosmotic stress. Osmoresponsive activation is triggered by a change in the internal K(+) concentration. In addition, shows a pronounced chill stimulation, at temperatures around 10 degrees Celsius. Chill activation may be influenced by the membrane lipid composition. Uptake is completely abolished by the uncoupler CCCP, and to a different extent by the ionophores valinomycin and nigericin. Its function is as follows. Involved in response to osmotic stress. High-affinity glycine betaine-specific uptake system, which couples the uptake of glycine betaine to the symport of two Na(+) ions. Transport is driven both by the Na(+) gradient and by the electrical potential. In addition, functions both as an osmosensor and as an osmoregulator that transduces signal to the catalytic part of the carrier protein, which adapts its activity to the extent of osmotic stress. This chain is Glycine betaine transporter BetP, found in Corynebacterium glutamicum (strain ATCC 13032 / DSM 20300 / JCM 1318 / BCRC 11384 / CCUG 27702 / LMG 3730 / NBRC 12168 / NCIMB 10025 / NRRL B-2784 / 534).